We begin with the raw amino-acid sequence, 460 residues long: Ribosomal protein uS12 methylthiotransferase RimO (460 aa).

The 115-residue stretch at 16 to 130 folds into the MTTase N-terminal domain; the sequence is NKIHFISLGC…ILSAIESKEA (115 aa). 6 residues coordinate [4Fe-4S] cluster: C25, C61, C93, C164, C168, and C171. The region spanning 150 to 382 is the Radical SAM core domain; that stretch reads STPKHYAYLK…SQTQKKNVEK (233 aa). One can recognise a TRAM domain in the interval 385–455; it reads KQLVGQIVEA…GYDLVGRVIK (71 aa).

It belongs to the methylthiotransferase family. RimO subfamily. It depends on [4Fe-4S] cluster as a cofactor.

It is found in the cytoplasm. It carries out the reaction L-aspartate(89)-[ribosomal protein uS12]-hydrogen + (sulfur carrier)-SH + AH2 + 2 S-adenosyl-L-methionine = 3-methylsulfanyl-L-aspartate(89)-[ribosomal protein uS12]-hydrogen + (sulfur carrier)-H + 5'-deoxyadenosine + L-methionine + A + S-adenosyl-L-homocysteine + 2 H(+). Catalyzes the methylthiolation of an aspartic acid residue of ribosomal protein uS12. In Chlamydia caviae (strain ATCC VR-813 / DSM 19441 / 03DC25 / GPIC) (Chlamydophila caviae), this protein is Ribosomal protein uS12 methylthiotransferase RimO.